Reading from the N-terminus, the 114-residue chain is Protein ORF3 (114 aa).

Hydrophobic stretches follow at residues 6–22 (CALG…CLCC) and 33–53 (AVVG…GLIL). The segment at 28 to 68 (VSRLAAVVGGAAAVPAVVSGVTGLILSPSQSPIFIQPTPSP) is interaction with host HPX. The interval 48–72 (VTGLILSPSQSPIFIQPTPSPPMSP) is interaction with the capsid protein. Serine 71 carries the post-translational modification Phosphoserine; by host. The homodimerization, and interaction with host AMBP/bikunin stretch occupies residues 72-114 (PLRPGLDLVFANPPDHSAPLGVTRPSAPPLPHVVDLPQLGPRR). Residues 91 to 114 (LGVTRPSAPPLPHVVDLPQLGPRR) form a disordered region. The interaction with host SRC, HCK, FYN, PIK3R3 and GRB2 stretch occupies residues 95–104 (RPSAPPLPHV). Positions 96 to 99 (PSAP) match the PTAP/PSAP motif motif.

It belongs to the hepevirus ORF3 protein family. As to quaternary structure, forms homooligomers. Interacts with host SRC, HCK, FYN, PIK3R3 and GRB2 (via SH3 domain); binding does not activate the kinases. Interacts with host AMBP/bikunin and AMBP/alpha-1-microglobulin peptides. Interacts with host HPX/hemopexin. Interacts (when phosphorylated) with capsid protein ORF2. Interacts with host TSG101; this interaction plays a role in viral release from the host cell. Interacts with host SIRPA; this interaction down-regulates the phosphorylation of host IRF3. Palmitoylated in the N-terminus.

It is found in the host endoplasmic reticulum membrane. The protein resides in the host cytoplasm. It localises to the host cytoskeleton. The protein localises to the virion. Its subcellular location is the host cell membrane. Functionally, small multifunctional phosphoprotein involved in virion morphogenesis, egress and counteracting host innate immunity. Plays critical roles in the final steps of viral release by interacting with host TSG101, a member of the vacuolar protein-sorting pathway and using other cellular host proteins involved in vesicle formation pathway. Also acts as a viroporin and forms ion conductive pores allowing viral particle release. Impairs the generation of type I interferon by down-regulating host TLR3 and TLR7 as well as their downstream signaling pathways. Down-regulates the phosphorylation of host IRF3 via the interaction with host SIRP-alpha, thereby inhibiting IFN-I expression. Interacts with host microtubules. The polypeptide is Protein ORF3 (Hepatitis E virus genotype 1 (isolate Human/Burma) (HEV-1)).